The primary structure comprises 433 residues: MEVARDGIMHPVDDFLMVVKAAMLEMMMMGKMAERYYYYVQLAFKMLVGVLKNLPVVYSYRYDAREYITETSNAVLGDDEVFEFGSSGEMVNSFLAFLRRALDWCAKFDEPPDMGGHGIEFMYPTRPTRIQRSTMGYFVRPKVPAAIVADAAVAAANLHFSNQVGEVSVRVPSRDLQPGEAGPSSSGGGRRDPAQANRGPVARVTPFVVERRYEEGEPGENGDESDEDGGRMDGDEDAAQSEQNNDDGMDYESDVTDHSSAWGEEPDRRHDAEAGERGSERSGSNSEADERRRSYENDDIQVDVTSVSEDSESDGDFEERRDARIRGATADAPRPRRGEREEDDERGEGAANDGGRRPARRDSPDSVIVIDDTSSSEDETFPPVLWLQRRDDPRTLLSRTRRAASRTRTIGGTRPRSRSPHRRGEGRDLPEDN.

Residues 36-58 traverse the membrane as a helical segment; that stretch reads YYYYVQLAFKMLVGVLKNLPVVY. Residues 169 to 433 form a disordered region; that stretch reads VRVPSRDLQP…GEGRDLPEDN (265 aa). Acidic residues-rich tracts occupy residues 216–227 and 234–254; these read GEPGENGDESDE and GDED…YESD. 3 stretches are compositionally biased toward basic and acidic residues: residues 265–280, 354–364, and 422–433; these read EPDR…RGSE, GGRRPARRDSP, and RRGEGRDLPEDN.

It localises to the host membrane. This is an uncharacterized protein from Psittacid herpesvirus 1 (isolate Amazon parrot/-/97-0001/1997) (PsHV-1).